A 510-amino-acid polypeptide reads, in one-letter code: NKAP family protein (510 aa).

Residues Met1–Arg22 are compositionally biased toward basic and acidic residues. Disordered regions lie at residues Met1–Gln128, Glu149–Gly220, and Val239–Glu401. Positions Tyr23 to Ser39 are enriched in basic residues. Over residues Arg40–Lys89 the composition is skewed to basic and acidic residues. The segment covering Ser96–Gly105 has biased composition (gly residues). 2 stretches are compositionally biased toward low complexity: residues Ser112–Ser123 and Asn184–Asn219. Residues Asn262–Ser273 are compositionally biased toward basic residues. Positions Ser274–Asp283 are enriched in low complexity. Residues Arg292 to Ser322 show a composition bias toward basic residues. Residues Asp342–Arg351 show a composition bias toward basic and acidic residues. Residues Ser352 to His367 are compositionally biased toward basic residues. The span at His368–Glu383 shows a compositional bias: basic and acidic residues.

The protein belongs to the NKAP family.

In Dictyostelium discoideum (Social amoeba), this protein is NKAP family protein.